The primary structure comprises 153 residues: MRCPSCSHNGTRVLDSRPVDEGRSIRRRRECESCLSRFTTFERVEESPLIVVKKEGTREEFNKEKILRGLIKACEKRPVSLRQLEEVTQSVERELRNLGISEVKSDMIGEIVMEELRDIDDVAYVRFASVYRQFKDLNVFIEELKDILQKERE.

The segment at 3 to 34 (CPSCSHNGTRVLDSRPVDEGRSIRRRRECESC) is a zinc-finger region. The ATP-cone domain maps to 49–139 (LIVVKKEGTR…VYRQFKDLNV (91 aa)).

This sequence belongs to the NrdR family. It depends on Zn(2+) as a cofactor.

Negatively regulates transcription of bacterial ribonucleotide reductase nrd genes and operons by binding to NrdR-boxes. In Bacillus anthracis (strain A0248), this protein is Transcriptional repressor NrdR.